The primary structure comprises 724 residues: MADHLILSLQAPPFLIFPCSLHRSWRFPGGIRYSVPEFRLSSQLQLANSISPSKSSASSSSPPENSAPEKFDLVSSTQLKDGSHVFRFGDASEIEKYLEAEEKARCVEVETQNAKIAEEASEVSRKQKKLVSSIIETSTEKEETAAPSDLSNVIKIKDRKRVRSPTKKKKETVNVSRSEDKIDAKSASVSNLSSIVSVAEAIPISSTEEEAVVEKEITAKSYNVEPLSSEAMKKVSVNKIGDCETNGYQENRMEVQARPSLSTQQEITPVSTIEIDDNLDVTEKPIEAEENLVAEPTATDDLSPDELLSTSEATHRSVDEIAQKPVIDTSEENLLNTFEAEENPVVEPTATAAVSSDELISTSEATRHSVDEIAQKPIIDTSEKNPMETFVEPEAVHSSVDESTEKLVVVTSDVENDGENVASTTEDEITVRDTITDSGSISNNDDTKVEDLQLPVPETASLEPIKAASGREELVSKAFYLDSGFASLQSPFKALAGREDAYFISHHNWIGIADGVSQWSFEGINKGMYAQELMSNCEKIISNETAKISDPVQVLHRSVNETKSSGSSTALIAHLDNNELHIANIGDSGFMVIRDGTVLQNSSPMFHHFCFPLHITQGCDVLKLAEVYHVNLEEGDVVIAATDGLFDNLYEKEIVSIVCGSLKQSLEPQKIAELVAAKAQEVGRSKTERTPFADAAKEEGYNGHKGGKLDAVTVIISFVKIVST.

The tract at residues 357-385 (DELISTSEATRHSVDEIAQKPIIDTSEKN) is disordered. Positions 365–374 (ATRHSVDEIA) are enriched in basic and acidic residues. Positions 482–719 (DSGFASLQSP…DAVTVIISFV (238 aa)) constitute a PPM-type phosphatase domain. Aspartate 514, glycine 515, aspartate 643, and aspartate 710 together coordinate Mn(2+).

Belongs to the PP2C family. Requires Mg(2+) as cofactor. The cofactor is Mn(2+).

It catalyses the reaction O-phospho-L-seryl-[protein] + H2O = L-seryl-[protein] + phosphate. It carries out the reaction O-phospho-L-threonyl-[protein] + H2O = L-threonyl-[protein] + phosphate. The polypeptide is Probable protein phosphatase 2C 62 (Arabidopsis thaliana (Mouse-ear cress)).